Reading from the N-terminus, the 394-residue chain is Phosphopentomutase (394 aa).

Residues aspartate 13, aspartate 286, histidine 291, aspartate 327, histidine 328, and histidine 339 each coordinate Mn(2+).

The protein belongs to the phosphopentomutase family. Requires Mn(2+) as cofactor.

The protein resides in the cytoplasm. It carries out the reaction 2-deoxy-alpha-D-ribose 1-phosphate = 2-deoxy-D-ribose 5-phosphate. The catalysed reaction is alpha-D-ribose 1-phosphate = D-ribose 5-phosphate. The protein operates within carbohydrate degradation; 2-deoxy-D-ribose 1-phosphate degradation; D-glyceraldehyde 3-phosphate and acetaldehyde from 2-deoxy-alpha-D-ribose 1-phosphate: step 1/2. Functionally, isomerase that catalyzes the conversion of deoxy-ribose 1-phosphate (dRib-1-P) and ribose 1-phosphate (Rib-1-P) to deoxy-ribose 5-phosphate (dRib-5-P) and ribose 5-phosphate (Rib-5-P), respectively. This is Phosphopentomutase from Bacillus cereus (strain ATCC 10987 / NRS 248).